We begin with the raw amino-acid sequence, 49 residues long: Large ribosomal subunit protein bL33 (49 aa).

Belongs to the bacterial ribosomal protein bL33 family.

The protein is Large ribosomal subunit protein bL33 of Desulfitobacterium hafniense (strain Y51).